A 1038-amino-acid chain; its full sequence is Kinesin-like protein KIF17 (1038 aa).

A Kinesin motor domain is found at 5 to 335; it reads SVKVVVRCRP…LRYANRAKNI (331 aa). 91–98 contacts ATP; sequence GQTGSGKS. Residues 346–470 are a coiled coil; the sequence is KDALLREYQE…ETEAILKAEV (125 aa). Disordered regions lie at residues 379 to 401, 503 to 559, and 636 to 657; these read TQTPPGPVQSEEKLLSPTTVQQD, LSMP…GPEE, and DSSQTVVPQIPKQPSSADLLEP. 2 stretches are compositionally biased toward polar residues: residues 533–551 and 636–651; these read SEFSFESNECSTLEDSATS and DSSQTVVPQIPKQPSS. The stretch at 748 to 855 forms a coiled coil; the sequence is QQVLARLQLL…QLEKIDYLAT (108 aa). 2 disordered regions span residues 916 to 940 and 976 to 1038; these read VVPTGTQNKPARKTSAVDSGEPHMQ and MKSL…GEPL. Over residues 983-1000 the composition is skewed to low complexity; that stretch reads NSPPGLNSSLSNNSALPP.

It belongs to the TRAFAC class myosin-kinesin ATPase superfamily. Kinesin family. As to quaternary structure, homodimer. Interacts with APBA1 (via PDZ domain); the interaction is direct and is required for association of KIF17 with the cargo that is to be transported. Interacts with IFT B complex components IFT52 and IFT57. Interacts with IFT70B. Interacts with PIWIL1. Interacts with TBATA. Highly expressed in the gray matter of the brain, especially in the hippocampus.

It is found in the cytoplasm. The protein resides in the cytoskeleton. Its subcellular location is the cell projection. The protein localises to the cilium. It localises to the dendrite. Dendrite-specific motor protein which, in association with the Apba1-containing complex (LIN-10-LIN-2-LIN-7 complex), transports vesicles containing N-methyl-D-aspartate (NMDA) receptor subunit NR2B along microtubules. The protein is Kinesin-like protein KIF17 (Kif17) of Mus musculus (Mouse).